A 113-amino-acid chain; its full sequence is Insulin (113 aa).

Positions 1-24 are cleaved as a signal peptide; sequence MAALWLQAFSLLVLMMVSWPGSQA. Cystine bridges form between C32–C99, C44–C112, and C98–C103. A propeptide spans 56 to 90 (c peptide); that stretch reads DVDPLLGFLPPKAGGAVVQGGENEVTFKDQMEMMV.

The protein belongs to the insulin family. Heterodimer of a B chain and an A chain linked by two disulfide bonds.

Its subcellular location is the secreted. In terms of biological role, insulin decreases blood glucose concentration. It increases cell permeability to monosaccharides, amino acids and fatty acids. It accelerates glycolysis, the pentose phosphate cycle, and glycogen synthesis in liver. In Oreochromis niloticus (Nile tilapia), this protein is Insulin (ins).